Reading from the N-terminus, the 580-residue chain is Cleavage stimulation factor subunit 2 (580 aa).

Serine 14 carries the phosphoserine modification. Residues 16–94 (RSVFVGNIPY…RALRVDNAAS (79 aa)) form the RRM domain. The interactions with CSTF3 and SYMPK stretch occupies residues 108 to 248 (APVIESPYGE…VNGAPPMMQA (141 aa)). Residue lysine 189 forms a Glycyl lysine isopeptide (Lys-Gly) (interchain with G-Cter in SUMO2) linkage. Arginine 308 is modified (omega-N-methylarginine). Disordered stretches follow at residues 311-331 (LPTN…DPRG) and 347-414 (LGPP…RGLD). 2 stretches are compositionally biased toward basic and acidic residues: residues 363 to 376 (PGHE…HDMR) and 405 to 414 (RGGRDPRGLD). A 1; approximate repeat occupies 413 to 417 (LDARG). The segment at 413–472 (LDARGMEARAMEARGLDARGLEARAMEARAMEARAMEARAMEARAMEARAMEARGMDTRG) is 12 X 5 AA tandem repeats of M-E-A-R-[AG]. A run of 2 repeats spans residues 418 to 422 (MEARA) and 423 to 427 (MEARG). The 4; approximate repeat unit spans residues 428–432 (LDARG). The stretch at 433 to 437 (LEARA) is one 5; approximate repeat. 6 consecutive repeat copies span residues 438 to 442 (MEARA), 443 to 447 (MEARA), 448 to 452 (MEARA), 453 to 457 (MEARA), 458 to 462 (MEARA), and 463 to 467 (MEARG). The 12; approximate repeat unit spans residues 468–472 (MDTRG). Omega-N-methylarginine occurs at positions 471 and 478. The segment at 512–536 (MQGASMQGGSQPGGFSPGQSQVTPQ) is disordered. Positions 517–580 (MQGGSQPGGF…EQIQKSTGAP (64 aa)) are interaction with RPO2TC1. Phosphoserine occurs at positions 521 and 527.

The CSTF complex is composed of CSTF1 (50 kDa subunit), CSTF2 (64 kDa subunit) and CSTF3 (77 kDa subunit). CSTF2 directly interacts with CSTF3, SYMPK and RPO2TC1. Interacts with HSF1 in heat-stressed cells. Interacts with CPSF2, CPSF3 and FIP1L1. Interacts with DDX1. As to expression, expressed in most somatic cell types (at protein level). Highly expressed in testis, except in meiotic spermatocytes.

The protein resides in the nucleus. One of the multiple factors required for polyadenylation and 3'-end cleavage of mammalian pre-mRNAs. This subunit is directly involved in the binding to pre-mRNAs. In Mus musculus (Mouse), this protein is Cleavage stimulation factor subunit 2 (Cstf2).